A 539-amino-acid chain; its full sequence is Glutamate/serine transporter AimA (539 aa).

A run of 13 helical transmembrane segments spans residues 11 to 31, 36 to 56, 82 to 102, 137 to 157, 164 to 184, 199 to 219, 238 to 258, 283 to 303, 350 to 370, 401 to 421, 424 to 444, 457 to 477, and 486 to 506; these read FSLM…FGAW, IAGP…LFIA, SFIG…VIPV, AFAS…VNLF, ITIF…FVGF, GWAS…FNGF, IAVV…QIAF, LAIA…AFVS, LIVS…AEII, LKGL…VLYW, WPLT…YFYY, FKAG…SYLG, and VIHY…FYVW.

This sequence belongs to the amino acid-polyamine-organocation (APC) superfamily. AGT (TC 2.A.3.11) family.

It is found in the cell membrane. Major glutamate and serine transporter. Cannot transport threonine. AimA is the major glutamate transporter under standard growth conditions when glutamate is not limiting in the medium. In Bacillus subtilis (strain 168), this protein is Glutamate/serine transporter AimA.